The primary structure comprises 288 residues: S-methyl-5'-thioadenosine phosphorylase (288 aa).

Phosphate-binding positions include serine 12, 54–55, and 87–88; these read RH and SA. Methionine 186 contacts substrate. A phosphate-binding site is contributed by threonine 187. 210-212 contributes to the substrate binding site; it reads DYD.

It belongs to the PNP/MTAP phosphorylase family. MTAP subfamily. Homohexamer. Dimer of a homotrimer.

It catalyses the reaction S-methyl-5'-thioadenosine + phosphate = 5-(methylsulfanyl)-alpha-D-ribose 1-phosphate + adenine. It functions in the pathway amino-acid biosynthesis; L-methionine biosynthesis via salvage pathway; S-methyl-5-thio-alpha-D-ribose 1-phosphate from S-methyl-5'-thioadenosine (phosphorylase route): step 1/1. Its function is as follows. Catalyzes the reversible phosphorylation of S-methyl-5'-thioadenosine (MTA) to adenine and 5-methylthioribose-1-phosphate. Involved in the breakdown of MTA, a major by-product of polyamine biosynthesis. Responsible for the first step in the methionine salvage pathway after MTA has been generated from S-adenosylmethionine. Has broad substrate specificity with 6-aminopurine nucleosides as preferred substrates. In Chloroflexus aurantiacus (strain ATCC 29366 / DSM 635 / J-10-fl), this protein is S-methyl-5'-thioadenosine phosphorylase.